A 434-amino-acid polypeptide reads, in one-letter code: Polyadenylate-binding protein RBP47C' (434 aa).

A disordered region spans residues 1–50 (MADVKVQSESESSDSHPLVDYQSLPPYPPPHPPVEVEENQPKTSPTPPPP). RRM domains are found at residues 103–185 (KTIW…WASF), 199–278 (LSIF…PATP), and 306–378 (TTIF…WGRN).

This sequence belongs to the polyadenylate-binding RBP47 family. In terms of assembly, interacts with the poly(A) tail of mRNA in nucleus.

It is found in the nucleus. The protein resides in the cytoplasmic granule. In terms of biological role, heterogeneous nuclear ribonucleoprotein (hnRNP)-protein binding the poly(A) tail of mRNA and probably involved in some steps of pre-mRNA maturation. In Arabidopsis thaliana (Mouse-ear cress), this protein is Polyadenylate-binding protein RBP47C' (RBP47C').